We begin with the raw amino-acid sequence, 301 residues long: D-alanine--D-alanine ligase (301 aa).

The ATP-grasp domain maps to 102–295 (KAVFAAAGLP…FPALCAWMVE (194 aa)). 128-181 (PLPRPYVIKPVNEGSSVGVFILREGDNRRADIARAWRHGSVAMTEEYVPGRELT) serves as a coordination point for ATP. 3 residues coordinate Mg(2+): D248, E262, and N264.

Belongs to the D-alanine--D-alanine ligase family. Mg(2+) is required as a cofactor. It depends on Mn(2+) as a cofactor.

The protein resides in the cytoplasm. It catalyses the reaction 2 D-alanine + ATP = D-alanyl-D-alanine + ADP + phosphate + H(+). The protein operates within cell wall biogenesis; peptidoglycan biosynthesis. In terms of biological role, cell wall formation. This Acidiphilium cryptum (strain JF-5) protein is D-alanine--D-alanine ligase.